A 124-amino-acid polypeptide reads, in one-letter code: T cell receptor beta variable 13 (124 aa).

An N-terminal signal peptide occupies residues 1–31 (MLSPDLPDSAWNTRLLCRVMLCLLGAGSVAA). Residues 32–124 (GVIQSPRHLI…SALYFCASSL (93 aa)) enclose the Ig-like domain. Cys-52 and Cys-120 are joined by a disulfide. A glycan (N-linked (GlcNAc...) asparagine) is linked at Asn-106.

As to quaternary structure, alpha-beta TR is a heterodimer composed of an alpha and beta chain; disulfide-linked. The alpha-beta TR is associated with the transmembrane signaling CD3 coreceptor proteins to form the TR-CD3 (TcR or TCR). The assembly of alpha-beta TR heterodimers with CD3 occurs in the endoplasmic reticulum where a single alpha-beta TR heterodimer associates with one CD3D-CD3E heterodimer, one CD3G-CD3E heterodimer and one CD247 homodimer forming a stable octameric structure. CD3D-CD3E and CD3G-CD3E heterodimers preferentially associate with TR alpha and TR beta chains, respectively. The association of the CD247 homodimer is the last step of TcR assembly in the endoplasmic reticulum and is required for transport to the cell surface.

It localises to the cell membrane. V region of the variable domain of T cell receptor (TR) beta chain that participates in the antigen recognition. Alpha-beta T cell receptors are antigen specific receptors which are essential to the immune response and are present on the cell surface of T lymphocytes. Recognize peptide-major histocompatibility (MH) (pMH) complexes that are displayed by antigen presenting cells (APC), a prerequisite for efficient T cell adaptive immunity against pathogens. Binding of alpha-beta TR to pMH complex initiates TR-CD3 clustering on the cell surface and intracellular activation of LCK that phosphorylates the ITAM motifs of CD3G, CD3D, CD3E and CD247 enabling the recruitment of ZAP70. In turn ZAP70 phosphorylates LAT, which recruits numerous signaling molecules to form the LAT signalosome. The LAT signalosome propagates signal branching to three major signaling pathways, the calcium, the mitogen-activated protein kinase (MAPK) kinase and the nuclear factor NF-kappa-B (NF-kB) pathways, leading to the mobilization of transcription factors that are critical for gene expression and essential for T cell growth and differentiation. The T cell repertoire is generated in the thymus, by V-(D)-J rearrangement. This repertoire is then shaped by intrathymic selection events to generate a peripheral T cell pool of self-MH restricted, non-autoaggressive T cells. Post-thymic interaction of alpha-beta TR with the pMH complexes shapes TR structural and functional avidity. In Homo sapiens (Human), this protein is T cell receptor beta variable 13.